Consider the following 339-residue polypeptide: 2-halobenzoate 1,2-dioxygenase electron transfer component (339 aa).

A 2Fe-2S ferredoxin-type domain is found at 3–96 (HSIALRFEDD…DCVVRILASS (94 aa)). Positions 40, 45, 48, and 80 each coordinate [2Fe-2S] cluster. The ferredoxin-reductase stretch occupies residues 98-336 (ACQVKKSTMT…NFYFEKFAPT (239 aa)). The 101-residue stretch at 103-203 (KSTMTGQMTE…DGPYGAFYLR (101 aa)) folds into the FAD-binding FR-type domain.

It belongs to the bacterial ring-hydroxylating dioxygenase ferredoxin reductase family. As to quaternary structure, monomer. It is part of 2-halobenzoate dioxygenase two component enzyme system. The other component is a dioxygenase component consisting of 3 large (CbdA) subunits and 3 small (CbdB) subunits. It depends on FAD as a cofactor. [2Fe-2S] cluster serves as cofactor.

It catalyses the reaction 2 reduced [2Fe-2S]-[ferredoxin] + NAD(+) + H(+) = 2 oxidized [2Fe-2S]-[ferredoxin] + NADH. Its pathway is xenobiotic degradation; benzoate degradation via CoA ligation. Electron transfer component of 2-halobenzoate 1,2-dioxygenase system. This is 2-halobenzoate 1,2-dioxygenase electron transfer component (cbdC) from Burkholderia cepacia (Pseudomonas cepacia).